The chain runs to 106 residues: Large ribosomal subunit protein uL23 (106 aa).

It belongs to the universal ribosomal protein uL23 family. In terms of assembly, part of the 50S ribosomal subunit. Contacts protein L29, and trigger factor when it is bound to the ribosome.

One of the early assembly proteins it binds 23S rRNA. One of the proteins that surrounds the polypeptide exit tunnel on the outside of the ribosome. Forms the main docking site for trigger factor binding to the ribosome. In Neisseria meningitidis serogroup C / serotype 2a (strain ATCC 700532 / DSM 15464 / FAM18), this protein is Large ribosomal subunit protein uL23.